Consider the following 469-residue polypeptide: Asparagine--tRNA ligase (469 aa).

It belongs to the class-II aminoacyl-tRNA synthetase family. In terms of assembly, homodimer.

The protein localises to the cytoplasm. It carries out the reaction tRNA(Asn) + L-asparagine + ATP = L-asparaginyl-tRNA(Asn) + AMP + diphosphate + H(+). This chain is Asparagine--tRNA ligase, found in Porphyromonas gingivalis (strain ATCC BAA-308 / W83).